The following is a 324-amino-acid chain: Glutathione synthetase (324 aa).

The ATP-grasp domain occupies 125-312 (EKLFTTTHFP…ISTIILDNLE (188 aa)). 152 to 209 (FIKTYKDIIIKPLHGMAGLSIFRIKEHDPNTSVIIETMTKYETIPCISQNYITDIQKG) is an ATP binding site. Mg(2+) is bound by residues Glu-283 and Asn-285.

Belongs to the prokaryotic GSH synthase family. Requires Mg(2+) as cofactor. It depends on Mn(2+) as a cofactor.

The enzyme catalyses gamma-L-glutamyl-L-cysteine + glycine + ATP = glutathione + ADP + phosphate + H(+). It functions in the pathway sulfur metabolism; glutathione biosynthesis; glutathione from L-cysteine and L-glutamate: step 2/2. The protein is Glutathione synthetase of Buchnera aphidicola subsp. Baizongia pistaciae (strain Bp).